The primary structure comprises 539 residues: GMP synthase [glutamine-hydrolyzing] (539 aa).

Residues 4–202 (KILILDFGSQ…VLQIAGAKPD (199 aa)) enclose the Glutamine amidotransferase type-1 domain. Cys-81 acts as the Nucleophile in catalysis. Catalysis depends on residues His-176 and Glu-178. One can recognise a GMPS ATP-PPase domain in the interval 203–395 (WIMKNHIEEA…LGLPPEMVYR (193 aa)). 230–236 (SGGVDSS) contacts ATP.

As to quaternary structure, homodimer.

The catalysed reaction is XMP + L-glutamine + ATP + H2O = GMP + L-glutamate + AMP + diphosphate + 2 H(+). Its pathway is purine metabolism; GMP biosynthesis; GMP from XMP (L-Gln route): step 1/1. In terms of biological role, catalyzes the synthesis of GMP from XMP. This Burkholderia vietnamiensis (strain G4 / LMG 22486) (Burkholderia cepacia (strain R1808)) protein is GMP synthase [glutamine-hydrolyzing].